A 657-amino-acid polypeptide reads, in one-letter code: Interferon-induced GTP-binding protein Mx1 (657 aa).

Methionine 1 carries the N-acetylmethionine modification. The Dynamin-type G domain maps to 63–336; that stretch reads DLALPAIAVI…LITHICKTLP (274 aa). Residues 73 to 80 are G1 motif; the sequence is GDQSSGKS. 73–80 is a GTP binding site; that stretch reads GDQSSGKS. Residues 98 to 100 form a G2 motif region; it reads VTR. The tract at residues 174-177 is G3 motif; sequence DLPG. GTP-binding positions include 174–178 and 243–246; these read DLPGI and TKPD. The G4 motif stretch occupies residues 243–246; the sequence is TKPD. Positions 275-278 are G5 motif; the sequence is KCRG. The segment at 337–362 is bundle signaling element (BSE); that stretch reads LLENQIKENHEKITEELQKYGSDVPE. Residues 362 to 529 are middle domain; the sequence is EDEHEKMFFL…HFQMEQIVYC (168 aa). Residues 363 to 627 are stalk; it reads DEHEKMFFLI…KDTYSWLLKE (265 aa). A compositionally biased stretch (basic and acidic residues) spans 540–551; the sequence is RVREKDSDEEKK. The interval 540–559 is disordered; it reads RVREKDSDEEKKKKTSSMSH. A critical for lipid-binding region spans residues 550–553; the sequence is KKKK. The GED domain occupies 569-657; the sequence is LSEILEHLLA…ARRRLAKFPG (89 aa).

This sequence belongs to the TRAFAC class dynamin-like GTPase superfamily. Dynamin/Fzo/YdjA family. In terms of assembly, homooligomer. Oligomerizes into multimeric filamentous or ring-like structures by virtue of its stalk domain. Oligomerization is critical for GTPase activity, protein stability, and recognition of viral target structures. Interacts with TRPC1, TRPC3, TRPC4, TRPC5, TRPC6 and TRPC7. Interacts with HSPA5. Interacts with TUBB/TUBB5. Interacts with DDX39A and DDX39B. In terms of processing, ISGylated.

It localises to the cytoplasm. The protein localises to the endoplasmic reticulum membrane. Its subcellular location is the perinuclear region. Functionally, interferon-induced dynamin-like GTPase with antiviral activity. The sequence is that of Interferon-induced GTP-binding protein Mx1 (MX1) from Canis lupus familiaris (Dog).